A 176-amino-acid polypeptide reads, in one-letter code: Acireductone dioxygenase (176 aa).

Fe(2+) is bound by residues His81, His83, Glu87, and His126. Positions 81, 83, 87, and 126 each coordinate Ni(2+).

It belongs to the acireductone dioxygenase (ARD) family. Fe(2+) serves as cofactor. It depends on Ni(2+) as a cofactor.

It localises to the cytoplasm. It is found in the nucleus. The enzyme catalyses 1,2-dihydroxy-5-(methylsulfanyl)pent-1-en-3-one + O2 = 4-methylsulfanyl-2-oxobutanoate + formate + 2 H(+). The catalysed reaction is 1,2-dihydroxy-5-(methylsulfanyl)pent-1-en-3-one + O2 = 3-(methylsulfanyl)propanoate + CO + formate + 2 H(+). It functions in the pathway amino-acid biosynthesis; L-methionine biosynthesis via salvage pathway; L-methionine from S-methyl-5-thio-alpha-D-ribose 1-phosphate: step 5/6. Functionally, catalyzes 2 different reactions between oxygen and the acireductone 1,2-dihydroxy-3-keto-5-methylthiopentene (DHK-MTPene) depending upon the metal bound in the active site. Fe-containing acireductone dioxygenase (Fe-ARD) produces formate and 2-keto-4-methylthiobutyrate (KMTB), the alpha-ketoacid precursor of methionine in the methionine recycle pathway. Ni-containing acireductone dioxygenase (Ni-ARD) produces methylthiopropionate, carbon monoxide and formate, and does not lie on the methionine recycle pathway. The chain is Acireductone dioxygenase (adi1) from Sclerotinia sclerotiorum (strain ATCC 18683 / 1980 / Ss-1) (White mold).